Reading from the N-terminus, the 262-residue chain is Troponin T, slow skeletal muscle (262 aa).

Acidic residues predominate over residues 1–31; it reads MSDAEEQEYEEEQPEEEEAAEEEEAPEEPEP. Disordered regions lie at residues 1 to 59, 107 to 153, and 165 to 197; these read MSDA…PEGE, RAER…KKKV, and LVKA…NIDH. Position 2 is a phosphoserine; by CK2 (Ser2). The span at 32–41 shows a compositional bias: basic and acidic residues; sequence VAEREEERPK. The segment covering 43–55 has biased composition (pro residues); it reads SRPVVPPLIPPKI. Composition is skewed to basic and acidic residues over residues 107 to 149 and 177 to 197; these read RAER…DDAK and TGRE…NIDH.

It belongs to the troponin T family. Interacts with TPM3.

Functionally, troponin T is the tropomyosin-binding subunit of troponin, the thin filament regulatory complex which confers calcium-sensitivity to striated muscle actomyosin ATPase activity. The protein is Troponin T, slow skeletal muscle (TNNT1) of Sus scrofa (Pig).